A 365-amino-acid polypeptide reads, in one-letter code: 1-aminocyclopropane-1-carboxylate oxidase homolog 1 (365 aa).

One can recognise a Fe2OG dioxygenase domain in the interval 212 to 313 (CTNSLLLLGH…RISVACFFSS (102 aa)). Positions 238, 240, and 294 each coordinate Fe cation.

Belongs to the iron/ascorbate-dependent oxidoreductase family. Fe cation is required as a cofactor.

The protein is 1-aminocyclopropane-1-carboxylate oxidase homolog 1 of Arabidopsis thaliana (Mouse-ear cress).